Consider the following 107-residue polypeptide: Putative septation protein SpoVG (107 aa).

A disordered region spans residues 82–107; sequence ETDEVIPDKNAQPSSDSEDNGSEEEA. Over residues 97–107 the composition is skewed to acidic residues; that stretch reads DSEDNGSEEEA.

This sequence belongs to the SpoVG family.

In terms of biological role, could be involved in septation. This chain is Putative septation protein SpoVG, found in Staphylococcus carnosus (strain TM300).